A 78-amino-acid chain; its full sequence is Large ribosomal subunit protein bL28 (78 aa).

This sequence belongs to the bacterial ribosomal protein bL28 family.

The protein is Large ribosomal subunit protein bL28 of Trichodesmium erythraeum (strain IMS101).